The following is a 665-amino-acid chain: UvrABC system protein B (665 aa).

The region spanning 25–412 (ASIEGGNRYQ…ENRIVEQVIR (388 aa)) is the Helicase ATP-binding domain. An ATP-binding site is contributed by 38–45 (GATGTGKT). A Beta-hairpin motif is present at residues 91 to 114 (YYDYYQPEAYIPVTDTYIEKTAAI). Residues 429 to 583 (QIDDLLGEIK…VAYNKLHGIT (155 aa)) enclose the Helicase C-terminal domain. The UVR domain maps to 626 to 661 (PNLIDKLEAQMKEASKKLEFEEAAKLRDRIKQLRDK).

It belongs to the UvrB family. As to quaternary structure, forms a heterotetramer with UvrA during the search for lesions. Interacts with UvrC in an incision complex.

It localises to the cytoplasm. In terms of biological role, the UvrABC repair system catalyzes the recognition and processing of DNA lesions. A damage recognition complex composed of 2 UvrA and 2 UvrB subunits scans DNA for abnormalities. Upon binding of the UvrA(2)B(2) complex to a putative damaged site, the DNA wraps around one UvrB monomer. DNA wrap is dependent on ATP binding by UvrB and probably causes local melting of the DNA helix, facilitating insertion of UvrB beta-hairpin between the DNA strands. Then UvrB probes one DNA strand for the presence of a lesion. If a lesion is found the UvrA subunits dissociate and the UvrB-DNA preincision complex is formed. This complex is subsequently bound by UvrC and the second UvrB is released. If no lesion is found, the DNA wraps around the other UvrB subunit that will check the other stand for damage. This chain is UvrABC system protein B, found in Nostoc sp. (strain PCC 7120 / SAG 25.82 / UTEX 2576).